Here is a 343-residue protein sequence, read N- to C-terminus: GTPase Obg (343 aa).

The Obg domain maps to 1–159 (MKFIDEVKIQ…FELRLELRVL (159 aa)). The 175-residue stretch at 160–334 (ADVGLLGLPN…LIYAIMGHLQ (175 aa)) folds into the OBG-type G domain. GTP-binding positions include 166 to 173 (GLPNAGKS), 191 to 195 (FTTLY), 213 to 216 (DIPG), 284 to 287 (NKVD), and 315 to 317 (SAL). Ser-173 and Thr-193 together coordinate Mg(2+).

The protein belongs to the TRAFAC class OBG-HflX-like GTPase superfamily. OBG GTPase family. As to quaternary structure, monomer. The cofactor is Mg(2+).

The protein resides in the cytoplasm. An essential GTPase which binds GTP, GDP and possibly (p)ppGpp with moderate affinity, with high nucleotide exchange rates and a fairly low GTP hydrolysis rate. Plays a role in control of the cell cycle, stress response, ribosome biogenesis and in those bacteria that undergo differentiation, in morphogenesis control. This is GTPase Obg from Nitrosomonas europaea (strain ATCC 19718 / CIP 103999 / KCTC 2705 / NBRC 14298).